An 86-amino-acid polypeptide reads, in one-letter code: Cell division topological specificity factor (86 aa).

The protein belongs to the MinE family.

Prevents the cell division inhibition by proteins MinC and MinD at internal division sites while permitting inhibition at polar sites. This ensures cell division at the proper site by restricting the formation of a division septum at the midpoint of the long axis of the cell. This chain is Cell division topological specificity factor, found in Shewanella piezotolerans (strain WP3 / JCM 13877).